Consider the following 130-residue polypeptide: Small ribosomal subunit protein uS9 (130 aa).

It belongs to the universal ribosomal protein uS9 family.

This chain is Small ribosomal subunit protein uS9, found in Thioalkalivibrio sulfidiphilus (strain HL-EbGR7).